Reading from the N-terminus, the 422-residue chain is Light-independent protochlorophyllide reductase subunit N (422 aa).

Positions 26, 51, and 112 each coordinate [4Fe-4S] cluster.

Belongs to the BchN/ChlN family. In terms of assembly, protochlorophyllide reductase is composed of three subunits; BchL, BchN and BchB. Forms a heterotetramer of two BchB and two BchN subunits. Requires [4Fe-4S] cluster as cofactor.

The catalysed reaction is chlorophyllide a + oxidized 2[4Fe-4S]-[ferredoxin] + 2 ADP + 2 phosphate = protochlorophyllide a + reduced 2[4Fe-4S]-[ferredoxin] + 2 ATP + 2 H2O. It functions in the pathway porphyrin-containing compound metabolism; bacteriochlorophyll biosynthesis (light-independent). Component of the dark-operative protochlorophyllide reductase (DPOR) that uses Mg-ATP and reduced ferredoxin to reduce ring D of protochlorophyllide (Pchlide) to form chlorophyllide a (Chlide). This reaction is light-independent. The NB-protein (BchN-BchB) is the catalytic component of the complex. This is Light-independent protochlorophyllide reductase subunit N from Acidiphilium rubrum.